The sequence spans 358 residues: Uroporphyrinogen decarboxylase (358 aa).

Residues 29–33 (RQAGR), Asp79, Tyr155, Ser210, and His330 each bind substrate.

This sequence belongs to the uroporphyrinogen decarboxylase family. As to quaternary structure, homodimer.

The protein resides in the cytoplasm. It catalyses the reaction uroporphyrinogen III + 4 H(+) = coproporphyrinogen III + 4 CO2. It participates in porphyrin-containing compound metabolism; protoporphyrin-IX biosynthesis; coproporphyrinogen-III from 5-aminolevulinate: step 4/4. Its function is as follows. Catalyzes the decarboxylation of four acetate groups of uroporphyrinogen-III to yield coproporphyrinogen-III. In Bordetella petrii (strain ATCC BAA-461 / DSM 12804 / CCUG 43448), this protein is Uroporphyrinogen decarboxylase.